The sequence spans 299 residues: Large ribosomal subunit protein uL18 (299 aa).

It belongs to the universal ribosomal protein uL18 family. In terms of assembly, component of the large ribosomal subunit (LSU).

It is found in the cytoplasm. It localises to the nucleus. Component of the ribosome, a large ribonucleoprotein complex responsible for the synthesis of proteins in the cell. The small ribosomal subunit (SSU) binds messenger RNAs (mRNAs) and translates the encoded message by selecting cognate aminoacyl-transfer RNA (tRNA) molecules. The large subunit (LSU) contains the ribosomal catalytic site termed the peptidyl transferase center (PTC), which catalyzes the formation of peptide bonds, thereby polymerizing the amino acids delivered by tRNAs into a polypeptide chain. The nascent polypeptides leave the ribosome through a tunnel in the LSU and interact with protein factors that function in enzymatic processing, targeting, and the membrane insertion of nascent chains at the exit of the ribosomal tunnel. The sequence is that of Large ribosomal subunit protein uL18 (RpL5) from Bombyx mori (Silk moth).